Consider the following 617-residue polypeptide: Phosphatidylinositol-3,5-bisphosphate 3-phosphatase MTMR6 (617 aa).

One can recognise a GRAM domain in the interval 1-101 (MEHIRTTKVE…YNSLLQLSKQ (101 aa)). The tract at residues 2–141 (EHIRTTKVEQ…AEYERMGVPN (140 aa)) is interaction with RAB1B. Y108 carries the phosphotyrosine modification. The region spanning 124 to 499 (GWQLIDLAAE…FNFKFWRNMY (376 aa)) is the Myotubularin phosphatase domain. Positions 248, 273, and 274 each coordinate a 1,2-diacyl-sn-glycero-3-phospho-(1D-myo-inositol-3,5-bisphosphate). Residues N248, N273, and I274 each contribute to the a 1,2-diacyl-sn-glycero-3-phospho-(1D-myo-inositol-3-phosphate) site. C336 serves as the catalytic Phosphocysteine intermediate. Residues S337, D338, G339, W340, D341, R342, K378, and R382 each coordinate a 1,2-diacyl-sn-glycero-3-phospho-(1D-myo-inositol-3,5-bisphosphate). Residues S337, D338, G339, W340, D341, and R342 each contribute to the a 1,2-diacyl-sn-glycero-3-phospho-(1D-myo-inositol-3-phosphate) site. R382 serves as a coordination point for a 1,2-diacyl-sn-glycero-3-phospho-(1D-myo-inositol-3-phosphate). Residues S557, S585, and S607 each carry the phosphoserine modification.

It belongs to the protein-tyrosine phosphatase family. Non-receptor class myotubularin subfamily. As to quaternary structure, homodimer. Heterodimer (via C-terminus) with MTMR9 (via C-terminus). Interacts with ALKBH4. Interacts with KCNN4. Interacts (via GRAM domain) with RAB1B (in GDP-bound form); the interaction regulates MTMR6 recruitment to the endoplasmic reticulum-Golgi intermediate compartment. Isoform 1: Ubiquitously expressed including in heart, brain, spleen, lung, liver, muscle, kidney and testis (at protein level). Isoform 2: Expressed in testis (at protein level).

The protein resides in the cytoplasm. It is found in the endoplasmic reticulum-Golgi intermediate compartment. It localises to the cell projection. The protein localises to the ruffle membrane. Its subcellular location is the endoplasmic reticulum. The catalysed reaction is a 1,2-diacyl-sn-glycero-3-phospho-(1D-myo-inositol-3,5-bisphosphate) + H2O = a 1,2-diacyl-sn-glycero-3-phospho-(1D-myo-inositol-5-phosphate) + phosphate. It catalyses the reaction a 1,2-diacyl-sn-glycero-3-phospho-(1D-myo-inositol-3-phosphate) + H2O = a 1,2-diacyl-sn-glycero-3-phospho-(1D-myo-inositol) + phosphate. The enzyme catalyses 1,2-dioctanoyl-sn-glycero-3-phospho-(1D-myo-inositol-3,5-bisphosphate) + H2O = 1,2-dioctanoyl-sn-glycero-3-phospho-(1D-myo-inositol-5-phosphate) + phosphate. It carries out the reaction 1,2-dioctanoyl-sn-glycero-3-phospho-(1-D-myo-inositol-3-phosphate) + H2O = 1,2-dioctanoyl-sn-glycero-3-phospho-(1D-myo-inositol) + phosphate. Allosterically activated by phosphatidylserine and/or phosphatidylinositol 4-phosphate (PtdIns(4)P), and phosphatidylinositol 5-phosphate (PtdIns(5)P). Interaction with MTMR9 increases catalytic activity towards phosphatidylinositol 3,5-bisphosphate. Functionally, lipid phosphatase that specifically dephosphorylates the D-3 position of phosphatidylinositol 3-phosphate and phosphatidylinositol 3,5-bisphosphate, generating phosphatidylinositol and phosphatidylinositol 5-phosphate. Binds with high affinity to phosphatidylinositol 3,5-bisphosphate (PtdIns(3,5)P2) but also to phosphatidylinositol 3-phosphate (PtdIns(3)P), phosphatidylinositol 4-phosphate (PtdIns(4)P), and phosphatidylinositol 5-phosphate (PtdIns(5)P), phosphatidic acid and phosphatidylserine. Negatively regulates ER-Golgi protein transport. Probably in association with MTMR9, plays a role in the late stages of macropinocytosis by dephosphorylating phosphatidylinositol 3-phosphate in membrane ruffles. Acts as a negative regulator of KCNN4/KCa3.1 channel activity in CD4(+) T-cells possibly by decreasing intracellular levels of phosphatidylinositol 3-phosphate. Negatively regulates proliferation of reactivated CD4(+) T-cells. In complex with MTMR9, negatively regulates DNA damage-induced apoptosis. The formation of the MTMR6-MTMR9 complex stabilizes both MTMR6 and MTMR9 protein levels. This is Phosphatidylinositol-3,5-bisphosphate 3-phosphatase MTMR6 from Mus musculus (Mouse).